We begin with the raw amino-acid sequence, 348 residues long: Flagellar P-ring protein (348 aa).

An N-terminal signal peptide occupies residues 1-16 (MRVLTIFLLFMTSIFA).

This sequence belongs to the FlgI family. In terms of assembly, the basal body constitutes a major portion of the flagellar organelle and consists of four rings (L,P,S, and M) mounted on a central rod.

It localises to the periplasm. The protein localises to the bacterial flagellum basal body. Functionally, assembles around the rod to form the L-ring and probably protects the motor/basal body from shearing forces during rotation. The protein is Flagellar P-ring protein of Campylobacter jejuni subsp. jejuni serotype O:23/36 (strain 81-176).